Here is a 1107-residue protein sequence, read N- to C-terminus: Rho GTPase-activating protein 39 (1107 aa).

The tract at residues 1–21 (MSQAQDYECRSHHVDEQEPRI) is disordered. At S2 the chain carries N-acetylserine. Residues 7–19 (YECRSHHVDEQEP) show a composition bias toward basic and acidic residues. WW domains are found at residues 25 to 58 (STRL…PPAG) and 63 to 97 (RTSE…RPQN). The segment covering 111–122 (QNTESPRASADN) has biased composition (polar residues). Disordered regions lie at residues 111-173 (QNTE…PPGV), 218-267 (PSFL…PERR), 282-311 (SPLL…LYEE), and 326-370 (MDVQ…LMRT). Residues 123-136 (SPGRGSRDGSTGSS) are compositionally biased toward low complexity. Polar residues predominate over residues 242-254 (SGSQHSPNLQTFV). Position 282 is a phosphoserine (S282). Polar residues-rich tracts occupy residues 331–343 (EANS…SPQR) and 353–369 (LQTT…QLMR). Phosphoserine occurs at positions 380, 384, 402, and 403. Disordered stretches follow at residues 404 to 429 (PKLR…QPSP), 441 to 529 (SGDY…RASL), and 563 to 585 (MKQR…GAVP). Positions 470–484 (SWSSQQDTMSSTGYS) are enriched in polar residues. Phosphoserine is present on residues S597, S683, S708, and S719. The MyTH4 domain occupies 715–867 (WSSESIKKPM…PYVEEPDGVA (153 aa)). In terms of domain architecture, Rho-GAP spans 914-1102 (SALQEVMSMQ…VLIQHLDTSF (189 aa)).

The protein localises to the nucleus. The sequence is that of Rho GTPase-activating protein 39 (Arhgap39) from Mus musculus (Mouse).